Here is a 448-residue protein sequence, read N- to C-terminus: Glucose-6-phosphate isomerase (448 aa).

Catalysis depends on E288, which acts as the Proton donor. Residues H309 and K423 contribute to the active site.

It belongs to the GPI family.

The protein localises to the cytoplasm. The catalysed reaction is alpha-D-glucose 6-phosphate = beta-D-fructose 6-phosphate. The protein operates within carbohydrate biosynthesis; gluconeogenesis. It participates in carbohydrate degradation; glycolysis; D-glyceraldehyde 3-phosphate and glycerone phosphate from D-glucose: step 2/4. Catalyzes the reversible isomerization of glucose-6-phosphate to fructose-6-phosphate. The sequence is that of Glucose-6-phosphate isomerase from Fusobacterium nucleatum subsp. nucleatum (strain ATCC 25586 / DSM 15643 / BCRC 10681 / CIP 101130 / JCM 8532 / KCTC 2640 / LMG 13131 / VPI 4355).